A 183-amino-acid chain; its full sequence is Large ribosomal subunit protein eL18 (183 aa).

A disordered region spans residues 150–183 (RHFGPAPGAPRSHTKPYVRTKGHERARPRRRSNV). Over residues 161 to 183 (SHTKPYVRTKGHERARPRRRSNV) the composition is skewed to basic residues.

The protein belongs to the eukaryotic ribosomal protein eL18 family.

Its subcellular location is the cytoplasm. The sequence is that of Large ribosomal subunit protein eL18 (RpL18) from Spodoptera frugiperda (Fall armyworm).